The primary structure comprises 311 residues: Mediator of RNA polymerase II transcription subunit 27-A (311 aa).

This sequence belongs to the Mediator complex subunit 27 family. As to quaternary structure, component of the Mediator complex.

The protein resides in the nucleus. Component of the Mediator complex, a coactivator involved in the regulated transcription of nearly all RNA polymerase II-dependent genes. Mediator functions as a bridge to convey information from gene-specific regulatory proteins to the basal RNA polymerase II transcription machinery. Mediator is recruited to promoters by direct interactions with regulatory proteins and serves as a scaffold for the assembly of a functional preinitiation complex with RNA polymerase II and the general transcription factors. In Xenopus laevis (African clawed frog), this protein is Mediator of RNA polymerase II transcription subunit 27-A (med27-a).